A 737-amino-acid polypeptide reads, in one-letter code: Pentatricopeptide repeat-containing protein At3g49740 (737 aa).

19 PPR repeats span residues 20-55, 56-90, 91-121, 122-152, 154-188, 189-222, 223-253, 256-289, 290-321, 322-352, 353-387, 388-418, 420-454, 455-485, 488-522, 523-553, 554-588, 590-620, and 626-656; these read TLLN…TLRP, DQYS…GLLC, HSHV…IDEP, DVYS…MPER, DVAI…GVRH, DKFG…GFFI, ASSV…TDVA, DQVT…SLRP, TDLT…GYEK, YTLV…LEEK, DLVT…GVKP, DEFT…FGLS, KIEI…NLIS, WNAI…EVRI, DAYT…GQFK, ETLI…MSEK, DVVS…GKVI, DAAT…MVEF, and NVDH…SEKT. The interval 663-737 is type E motif; degenerate; it reads VWWALFSACA…KQRGCSWMRL (75 aa).

It belongs to the PPR family. PCMP-E subfamily.

The chain is Pentatricopeptide repeat-containing protein At3g49740 (PCMP-E84) from Arabidopsis thaliana (Mouse-ear cress).